Here is a 356-residue protein sequence, read N- to C-terminus: 5-formaminoimidazole-4-carboxamide-1-(beta)-D-ribofuranosyl 5'-monophosphate synthetase (356 aa).

5-amino-1-(5-phospho-beta-D-ribosyl)imidazole-4-carboxamide contacts are provided by His-27 and Ser-94. The region spanning 116–333 is the ATP-grasp domain; sequence RCLAWESDRE…YSDLIEKGLS (218 aa). ATP contacts are provided by residues 145–196 and Glu-226; that span reads AELI…TRYY. Asn-255 contacts 5-amino-1-(5-phospho-beta-D-ribosyl)imidazole-4-carboxamide. Mg(2+) contacts are provided by Glu-293 and Glu-306.

It belongs to the phosphohexose mutase family. The cofactor is Mg(2+). Mn(2+) serves as cofactor.

It carries out the reaction 5-amino-1-(5-phospho-beta-D-ribosyl)imidazole-4-carboxamide + formate + ATP = 5-formamido-1-(5-phospho-D-ribosyl)imidazole-4-carboxamide + ADP + phosphate. Its pathway is purine metabolism; IMP biosynthesis via de novo pathway; 5-formamido-1-(5-phospho-D-ribosyl)imidazole-4-carboxamide from 5-amino-1-(5-phospho-D-ribosyl)imidazole-4-carboxamide (formate route): step 1/1. In terms of biological role, catalyzes the ATP- and formate-dependent formylation of 5-aminoimidazole-4-carboxamide-1-beta-d-ribofuranosyl 5'-monophosphate (AICAR) to 5-formaminoimidazole-4-carboxamide-1-beta-d-ribofuranosyl 5'-monophosphate (FAICAR) in the absence of folates. The sequence is that of 5-formaminoimidazole-4-carboxamide-1-(beta)-D-ribofuranosyl 5'-monophosphate synthetase from Methanothrix thermoacetophila (strain DSM 6194 / JCM 14653 / NBRC 101360 / PT) (Methanosaeta thermophila).